The primary structure comprises 196 residues: Large ribosomal subunit protein uL5 (196 aa).

It belongs to the universal ribosomal protein uL5 family. As to quaternary structure, part of the 50S ribosomal subunit; part of the 5S rRNA/L5/L18/L25 subcomplex. Contacts the 5S rRNA and the P site tRNA. Forms a bridge to the 30S subunit in the 70S ribosome.

This is one of the proteins that bind and probably mediate the attachment of the 5S RNA into the large ribosomal subunit, where it forms part of the central protuberance. In the 70S ribosome it contacts protein S13 of the 30S subunit (bridge B1b), connecting the 2 subunits; this bridge is implicated in subunit movement. Contacts the P site tRNA; the 5S rRNA and some of its associated proteins might help stabilize positioning of ribosome-bound tRNAs. In Rhodopirellula baltica (strain DSM 10527 / NCIMB 13988 / SH1), this protein is Large ribosomal subunit protein uL5.